The sequence spans 475 residues: Adenylyl cyclase-associated protein 1 (475 aa).

N-acetylalanine is present on Ala2. Residue Tyr31 is modified to Phosphotyrosine. A Phosphoserine modification is found at Ser34. An N6-acetyllysine modification is found at Lys81. Disordered stretches follow at residues 216-255 (ELSG…ASRS) and 278-318 (MKTH…TKKE). Over residues 218-228 (SGLPSGPSAGS) the composition is skewed to low complexity. The span at 229 to 242 (GPPPPPPGPPPPPV) shows a compositional bias: pro residues. The segment covering 243 to 255 (STSSGSDESASRS) has biased composition (low complexity). An N6-methyllysine modification is found at Lys287. A phosphoserine mark is found at Ser290, Ser295, and Ser301. Positions 300–312 (FSAPKPQTSPSPK) are enriched in pro residues. Thr307 carries the post-translational modification Phosphothreonine. Phosphoserine is present on residues Ser308 and Ser310. One can recognise a C-CAP/cofactor C-like domain in the interval 313–453 (PATKKEPAVL…EGGDFNEFPV (141 aa)). Lys348 is covalently cross-linked (Glycyl lysine isopeptide (Lys-Gly) (interchain with G-Cter in SUMO1)).

The protein belongs to the CAP family. Homodimer. Binds actin monomers.

Its subcellular location is the cell membrane. In terms of biological role, directly regulates filament dynamics and has been implicated in a number of complex developmental and morphological processes, including mRNA localization and the establishment of cell polarity. This Macaca fascicularis (Crab-eating macaque) protein is Adenylyl cyclase-associated protein 1 (CAP1).